Here is a 530-residue protein sequence, read N- to C-terminus: Poly(U)-binding-splicing factor PUF60 (530 aa).

Positions Met1–Phe487 are inhibits homodimerization. Lys14 is covalently cross-linked (Glycyl lysine isopeptide (Lys-Gly) (interchain with G-Cter in SUMO2)). Thr31 bears the Phosphothreonine mark. Residues Gln48–Ala530 are inhibits transcriptional repression, interaction with ERCC3 and apoptosis induction. Lys51 participates in a covalent cross-link: Glycyl lysine isopeptide (Lys-Gly) (interchain with G-Cter in SUMO2). A Phosphoserine modification is found at Ser83. 2 RRM domains span residues Cys100–Asn178 and Asn197–Thr275. Ser215 carries the post-translational modification Phosphoserine. Lys222 bears the N6-acetyllysine mark. Residue Thr285 is modified to Phosphothreonine. The tract at residues Lys387 to Gln408 is disordered. A Glycyl lysine isopeptide (Lys-Gly) (interchain with G-Cter in SUMO2) cross-link involves residue Lys390. The segment covering Glu398–Gln408 has biased composition (basic and acidic residues). Position 425 is an N6-acetyllysine (Lys425). Residue Lys429 forms a Glycyl lysine isopeptide (Lys-Gly) (interchain with G-Cter in SUMO2) linkage. The 88-residue stretch at Thr433–Gln520 folds into the RRM 3; atypical domain.

This sequence belongs to the RRM half pint family. As to quaternary structure, homodimer. Associates with the spliceosome. Found in a complex with RO60 and Y5 RNA. Found in a complex with FUBP1 and far upstream element (FUSE) DNA segment. Interacts directly with ERCC3. Interacts with CDK7 and GTF2H1. Interacts with SRSF11/P54. Interacts with ARGLU1; interaction may be involved in ARGLU1-mediated modulation of alternative splicing.

The protein localises to the nucleus. Its function is as follows. DNA- and RNA-binding protein, involved in several nuclear processes such as pre-mRNA splicing, apoptosis and transcription regulation. In association with FUBP1 regulates MYC transcription at the P2 promoter through the core-TFIIH basal transcription factor. Acts as a transcriptional repressor through the core-TFIIH basal transcription factor. Represses FUBP1-induced transcriptional activation but not basal transcription. Decreases ERCC3 helicase activity. Is also involved in pre-mRNA splicing. Promotes splicing of an intron with weak 3'-splice site and pyrimidine tract in a cooperative manner with U2AF2. Involved in apoptosis induction when overexpressed in HeLa cells. Modulates alternative splicing of several mRNAs. Binds to relaxed DNA of active promoter regions. Binds to the pyrimidine tract and 3'-splice site regions of pre-mRNA; binding is enhanced in presence of U2AF2. Binds to Y5 RNA in association with RO60. Binds to poly(U) RNA. The sequence is that of Poly(U)-binding-splicing factor PUF60 from Bos taurus (Bovine).